A 468-amino-acid chain; its full sequence is ATP synthase subunit beta (468 aa).

Residue 155 to 162 (GGAGVGKT) participates in ATP binding.

The protein belongs to the ATPase alpha/beta chains family. In terms of assembly, F-type ATPases have 2 components, CF(1) - the catalytic core - and CF(0) - the membrane proton channel. CF(1) has five subunits: alpha(3), beta(3), gamma(1), delta(1), epsilon(1). CF(0) has three main subunits: a(1), b(2) and c(9-12). The alpha and beta chains form an alternating ring which encloses part of the gamma chain. CF(1) is attached to CF(0) by a central stalk formed by the gamma and epsilon chains, while a peripheral stalk is formed by the delta and b chains.

It is found in the cell membrane. It catalyses the reaction ATP + H2O + 4 H(+)(in) = ADP + phosphate + 5 H(+)(out). Its function is as follows. Produces ATP from ADP in the presence of a proton gradient across the membrane. The catalytic sites are hosted primarily by the beta subunits. This Streptococcus gordonii (strain Challis / ATCC 35105 / BCRC 15272 / CH1 / DL1 / V288) protein is ATP synthase subunit beta.